The following is a 434-amino-acid chain: Serine--tRNA ligase (434 aa).

239–241 (TAE) contributes to the L-serine binding site. 270–272 (RSE) provides a ligand contact to ATP. An L-serine-binding site is contributed by Glu293. ATP is bound at residue 357–360 (EISS). Ser392 contributes to the L-serine binding site.

This sequence belongs to the class-II aminoacyl-tRNA synthetase family. Type-1 seryl-tRNA synthetase subfamily. Homodimer. The tRNA molecule binds across the dimer.

Its subcellular location is the cytoplasm. It carries out the reaction tRNA(Ser) + L-serine + ATP = L-seryl-tRNA(Ser) + AMP + diphosphate + H(+). The enzyme catalyses tRNA(Sec) + L-serine + ATP = L-seryl-tRNA(Sec) + AMP + diphosphate + H(+). Its pathway is aminoacyl-tRNA biosynthesis; selenocysteinyl-tRNA(Sec) biosynthesis; L-seryl-tRNA(Sec) from L-serine and tRNA(Sec): step 1/1. Catalyzes the attachment of serine to tRNA(Ser). Is also able to aminoacylate tRNA(Sec) with serine, to form the misacylated tRNA L-seryl-tRNA(Sec), which will be further converted into selenocysteinyl-tRNA(Sec). This Cupriavidus taiwanensis (strain DSM 17343 / BCRC 17206 / CCUG 44338 / CIP 107171 / LMG 19424 / R1) (Ralstonia taiwanensis (strain LMG 19424)) protein is Serine--tRNA ligase.